Here is a 282-residue protein sequence, read N- to C-terminus: Elongation factor Ts (282 aa).

The interval 80–83 (TDFV) is involved in Mg(2+) ion dislocation from EF-Tu.

The protein belongs to the EF-Ts family.

The protein localises to the cytoplasm. Its function is as follows. Associates with the EF-Tu.GDP complex and induces the exchange of GDP to GTP. It remains bound to the aminoacyl-tRNA.EF-Tu.GTP complex up to the GTP hydrolysis stage on the ribosome. The sequence is that of Elongation factor Ts from Chlamydia trachomatis serovar A (strain ATCC VR-571B / DSM 19440 / HAR-13).